The primary structure comprises 338 residues: 4'-phosphopantetheinyl transferase (338 aa).

Belongs to the P-Pant transferase superfamily.

The enzyme catalyses apo-[ACP] + CoA = holo-[ACP] + adenosine 3',5'-bisphosphate + H(+). Acyl-carrier-protein synthase that transfers the 4'-phosphopantetheine moiety from coenzyme A to a Ser of an acyl-carrier-protein. The 4'-phosphopantetheine (4'-PPT) portion of CoA provides the essential prosthetic group for a number of carrier proteins and multi-domain enzymes, priming them for the acceptance of acyl building blocks in fatty acid synthesis and many aspects of secondary metabolism mediated by polyketide synthases (PKSs) and non-ribosomal peptide synthetases (NRPSs). Plays a key role in liamocins biosynthesis by activationg the HR-PKS PKS1 that produces 3,5-dihydroxydecanoic acid, a precursor of liamocins. The protein is 4'-phosphopantetheinyl transferase of Aureobasidium melanogenum (Aureobasidium pullulans var. melanogenum).